The primary structure comprises 284 residues: Phosphatidylglycerol--prolipoprotein diacylglyceryl transferase (284 aa).

7 helical membrane passes run 14–34 (IAFS…ACAI), 62–82 (YFLW…ILIY), 106–126 (FVGI…IASY), 136–156 (LLIY…FGRI), 190–210 (PSQL…VMWA), 218–238 (GLLI…AEFY), and 252–272 (LSMG…ILLY). An a 1,2-diacyl-sn-glycero-3-phospho-(1'-sn-glycerol)-binding site is contributed by R155.

The protein belongs to the Lgt family.

It is found in the cell inner membrane. It carries out the reaction L-cysteinyl-[prolipoprotein] + a 1,2-diacyl-sn-glycero-3-phospho-(1'-sn-glycerol) = an S-1,2-diacyl-sn-glyceryl-L-cysteinyl-[prolipoprotein] + sn-glycerol 1-phosphate + H(+). It functions in the pathway protein modification; lipoprotein biosynthesis (diacylglyceryl transfer). Catalyzes the transfer of the diacylglyceryl group from phosphatidylglycerol to the sulfhydryl group of the N-terminal cysteine of a prolipoprotein, the first step in the formation of mature lipoproteins. In Helicobacter pylori (strain ATCC 700392 / 26695) (Campylobacter pylori), this protein is Phosphatidylglycerol--prolipoprotein diacylglyceryl transferase.